The primary structure comprises 144 residues: Probable nucleoside diphosphate kinase 5 (144 aa).

Residues Lys-3, Phe-51, Arg-79, Thr-85, Arg-99, and Asn-109 each coordinate ATP. His-112 (pros-phosphohistidine intermediate) is an active-site residue.

Belongs to the NDK family.

The catalysed reaction is a 2'-deoxyribonucleoside 5'-diphosphate + ATP = a 2'-deoxyribonucleoside 5'-triphosphate + ADP. It catalyses the reaction a ribonucleoside 5'-diphosphate + ATP = a ribonucleoside 5'-triphosphate + ADP. In terms of biological role, involved in the synthesis of nucleoside triphosphates other than ATP. The ATP gamma phosphate is transferred to the NDP beta phosphate via a ping-pong mechanism, using a phosphorylated active-site intermediate. This Arabidopsis thaliana (Mouse-ear cress) protein is Probable nucleoside diphosphate kinase 5.